Consider the following 291-residue polypeptide: Foldase protein PrsA 2 (291 aa).

Positions 1–20 are cleaved as a signal peptide; that stretch reads MKKKLILGLVMMMALFSLAA. Cys21 is lipidated: N-palmitoyl cysteine. A lipid anchor (S-diacylglycerol cysteine) is attached at Cys21. Residues 135-226 form the PpiC domain; sequence QPDITVSHIL…YGYHIIQMDK (92 aa).

It belongs to the PrsA family.

Its subcellular location is the cell membrane. It catalyses the reaction [protein]-peptidylproline (omega=180) = [protein]-peptidylproline (omega=0). Its function is as follows. Plays a major role in protein secretion by helping the post-translocational extracellular folding of several secreted proteins. This chain is Foldase protein PrsA 2 (prsA2), found in Listeria innocua serovar 6a (strain ATCC BAA-680 / CLIP 11262).